The sequence spans 251 residues: Imidazole glycerol phosphate synthase subunit HisF (251 aa).

Catalysis depends on residues D11 and D130.

The protein belongs to the HisA/HisF family. In terms of assembly, heterodimer of HisH and HisF.

It is found in the cytoplasm. The catalysed reaction is 5-[(5-phospho-1-deoxy-D-ribulos-1-ylimino)methylamino]-1-(5-phospho-beta-D-ribosyl)imidazole-4-carboxamide + L-glutamine = D-erythro-1-(imidazol-4-yl)glycerol 3-phosphate + 5-amino-1-(5-phospho-beta-D-ribosyl)imidazole-4-carboxamide + L-glutamate + H(+). It participates in amino-acid biosynthesis; L-histidine biosynthesis; L-histidine from 5-phospho-alpha-D-ribose 1-diphosphate: step 5/9. In terms of biological role, IGPS catalyzes the conversion of PRFAR and glutamine to IGP, AICAR and glutamate. The HisF subunit catalyzes the cyclization activity that produces IGP and AICAR from PRFAR using the ammonia provided by the HisH subunit. This Chlorobium limicola (strain DSM 245 / NBRC 103803 / 6330) protein is Imidazole glycerol phosphate synthase subunit HisF.